The following is a 664-amino-acid chain: DNA ligase (664 aa).

Residues 32–36 and 80–81 each bind NAD(+); these read DKEYD and SL. Catalysis depends on K122, which acts as the N6-AMP-lysine intermediate. Positions 144, 178, and 314 each coordinate NAD(+). The Zn(2+) site is built by C407, C410, C423, and C429. The 78-residue stretch at 587 to 664 folds into the BRCT domain; that stretch reads IDENPFMDKT…NEEEFSNKIK (78 aa).

It belongs to the NAD-dependent DNA ligase family. LigA subfamily. Requires Mg(2+) as cofactor. The cofactor is Mn(2+).

The enzyme catalyses NAD(+) + (deoxyribonucleotide)n-3'-hydroxyl + 5'-phospho-(deoxyribonucleotide)m = (deoxyribonucleotide)n+m + AMP + beta-nicotinamide D-nucleotide.. DNA ligase that catalyzes the formation of phosphodiester linkages between 5'-phosphoryl and 3'-hydroxyl groups in double-stranded DNA using NAD as a coenzyme and as the energy source for the reaction. It is essential for DNA replication and repair of damaged DNA. The protein is DNA ligase of Clostridium botulinum (strain Loch Maree / Type A3).